The following is a 269-amino-acid chain: Sulfur carrier protein FdhD (269 aa).

The active-site Cysteine persulfide intermediate is the cysteine 111.

The protein belongs to the FdhD family.

Its subcellular location is the cytoplasm. In terms of biological role, required for formate dehydrogenase (FDH) activity. Acts as a sulfur carrier protein that transfers sulfur from IscS to the molybdenum cofactor prior to its insertion into FDH. This Brucella abortus biovar 1 (strain 9-941) protein is Sulfur carrier protein FdhD.